A 99-amino-acid polypeptide reads, in one-letter code: Acylphosphatase (99 aa).

Residues 5-97 (VRQVTVQGRV…RPGERFSTLP (93 aa)) form the Acylphosphatase-like domain. Active-site residues include R20 and N38.

It belongs to the acylphosphatase family.

It catalyses the reaction an acyl phosphate + H2O = a carboxylate + phosphate + H(+). This Rhodopseudomonas palustris (strain BisB18) protein is Acylphosphatase (acyP).